A 761-amino-acid polypeptide reads, in one-letter code: MSCCTMDAESVLALSTTSFSAEEVRLASQPLGEGLRQLDLSVSDVHCGGCISTIERALLTLPFVKTARVNLTARRVTCVYQEEIEARATDPSKILGEINSAGYRAHLFTPSAPESDKTRNQLLLAIGVSGFAAPNIMLLSVSVWSGADAATRDMFHWISAMIAAPALVYAGRFFFKSAWNALRHGRTNMDVPISVTVSLSYAVSLWETVHHGEHAWFDASVSLLFFLLIGRTLDHIMREKARAAINGLARLAPRGALLINPDGSRRYIAVEEIAAGDEISIAAGERVPVDGIVVSGESDLDLSIVTGESSPVTVASDSEVSSGAMNLTGSLVLRATRIAKNSLLSEIIGLMEAAEGGRARYRRIADRAATLYSPVVHLLALVSFLAWGFLGGDWKQAMLVAVAVLIITCPCALGLAVPVVQVVAAGELFRKGIMVKDGSALERLAETDTVAFDKTGTLTMGSSRLVRVDAMDESAAAIARGLAAHSRHPLSRALVRDTETAPISFDRVTEIPGGGLEARNGADIYRLGNAAFACGTSFVPRTADSPFSEVVLSKNGVDLARFFFDDTLRPGACEAIDRLDAAGLETLIVSGDRQTVVDNTAHALGIDRALGSLTPKQKVEECQRLNGEGRRVLMVGDGINDAPALAAAHVSMAPATASDIGRQAADLVFFIDRLDAVPEAIAVARRSASLIRQNFALAIGYNVLAVPIAIAGLATPLIAAVAMSTSSIIVVTNALRLNGFGKRPDMHIRRGIGRSAEVKAA.

The Cytoplasmic portion of the chain corresponds to 1-120; sequence MSCCTMDAES…SAPESDKTRN (120 aa). Residues 36–106 form the HMA domain; sequence RQLDLSVSDV…EINSAGYRAH (71 aa). A metal cation-binding residues include C47 and C50. The chain crosses the membrane as a helical span at residues 121-142; sequence QLLLAIGVSGFAAPNIMLLSVS. Topologically, residues 143–155 are extracellular; that stretch reads VWSGADAATRDMF. Residues 156-177 form a helical membrane-spanning segment; that stretch reads HWISAMIAAPALVYAGRFFFKS. The Cytoplasmic segment spans residues 178–184; it reads AWNALRH. Residues 185-205 traverse the membrane as a helical segment; that stretch reads GRTNMDVPISVTVSLSYAVSL. Topologically, residues 206–217 are extracellular; that stretch reads WETVHHGEHAWF. The helical transmembrane segment at 218–238 threads the bilayer; sequence DASVSLLFFLLIGRTLDHIMR. Over 239–367 the chain is Cytoplasmic; the sequence is EKARAAINGL…RARYRRIADR (129 aa). Residues 368–390 form a helical membrane-spanning segment; sequence AATLYSPVVHLLALVSFLAWGFL. Residues 391–395 are Extracellular-facing; sequence GGDWK. Residues 396–415 form a helical membrane-spanning segment; sequence QAMLVAVAVLIITCPCALGL. Over 416–691 the chain is Cytoplasmic; it reads AVPVVQVVAA…AVARRSASLI (276 aa). D453 acts as the 4-aspartylphosphate intermediate in catalysis. 2 residues coordinate Mg(2+): D637 and D641. A helical membrane pass occupies residues 692–711; the sequence is RQNFALAIGYNVLAVPIAIA. The Extracellular portion of the chain corresponds to 712-716; that stretch reads GLATP. Residues 717 to 735 form a helical membrane-spanning segment; the sequence is LIAAVAMSTSSIIVVTNAL. The Cytoplasmic portion of the chain corresponds to 736 to 761; the sequence is RLNGFGKRPDMHIRRGIGRSAEVKAA.

It belongs to the cation transport ATPase (P-type) (TC 3.A.3) family. Type IB subfamily.

It localises to the cell membrane. It catalyses the reaction ATP + H2O = ADP + phosphate + H(+). In terms of biological role, fixI is a pump of a specific cation involved in symbiotic nitrogen fixation. The four proteins FixG, FixH, FixI, and FixS may participate in a membrane-bound complex coupling the FixI cation pump with a redox process catalyzed by FixG. The chain is Nitrogen fixation protein FixI (fixI) from Rhizobium leguminosarum bv. viciae.